Consider the following 520-residue polypeptide: Cholesterol side-chain cleavage enzyme, mitochondrial (520 aa).

A mitochondrion-targeting transit peptide spans methionine 1 to glycine 39. The disordered stretch occupies residues tryptophan 27–proline 47. Cysteine 461 contacts heme.

The protein belongs to the cytochrome P450 family. As to quaternary structure, interacts with FDX1/adrenodoxin. Heme is required as a cofactor.

The protein resides in the mitochondrion inner membrane. The enzyme catalyses 6 reduced [adrenodoxin] + cholesterol + 3 O2 + 6 H(+) = 4-methylpentanal + pregnenolone + 6 oxidized [adrenodoxin] + 4 H2O. It catalyses the reaction 2 reduced [adrenodoxin] + cholesterol + O2 + 2 H(+) = (22R)-hydroxycholesterol + 2 oxidized [adrenodoxin] + H2O. The catalysed reaction is (22R)-hydroxycholesterol + 2 reduced [adrenodoxin] + O2 + 2 H(+) = (20R,22R)-20,22-dihydroxycholesterol + 2 oxidized [adrenodoxin] + H2O. It carries out the reaction (20R,22R)-20,22-dihydroxycholesterol + 2 reduced [adrenodoxin] + O2 + 2 H(+) = 4-methylpentanal + pregnenolone + 2 oxidized [adrenodoxin] + 2 H2O. It participates in lipid metabolism; C21-steroid hormone metabolism. It functions in the pathway steroid metabolism; cholesterol metabolism. A cytochrome P450 monooxygenase that catalyzes the side-chain hydroxylation and cleavage of cholesterol to pregnenolone, the precursor of most steroid hormones. Catalyzes three sequential oxidation reactions of cholesterol, namely the hydroxylation at C22 followed with the hydroxylation at C20 to yield 20R,22R-hydroxycholesterol that is further cleaved between C20 and C22 to yield the C21-steroid pregnenolone and 4-methylpentanal. Mechanistically, uses molecular oxygen inserting one oxygen atom into a substrate and reducing the second into a water molecule. Two electrons are provided by NADPH via a two-protein mitochondrial transfer system comprising flavoprotein FDXR (adrenodoxin/ferredoxin reductase) and nonheme iron-sulfur protein FDX1 or FDX2 (adrenodoxin/ferredoxin). The protein is Cholesterol side-chain cleavage enzyme, mitochondrial of Ovis aries (Sheep).